Consider the following 551-residue polypeptide: Sodium-dependent high-affinity dicarboxylate transporter 2 (551 aa).

10 helical membrane passes run 9-29 (LIKKLLVLLGPLVAVPLLFFG), 34-54 (CLFSIIFLSTYWIGEAFPIGV), 82-102 (SIVLFMCTLIMAMAVEATGLH), 119-139 (VMLLGFMCITSFISFFVSDTA), 194-214 (FCKALILACAHASLIGGTAII), 243-263 (WMVFAIPPMFVYLLASYIILV), 347-367 (VSGVLISCILFVWPKDPFDPI), 417-437 (IFVGMSSLPLQLTVTTIIVIM), 449-469 (IFIPISLGVAESMGVHPLYLA), and 497-517 (VISMVEMIVCGFLLNIACILI).

The protein belongs to the SLC13A/DASS transporter (TC 2.A.47) family. NADC subfamily.

Its subcellular location is the membrane. In terms of biological role, high-affinity sodium-dicarboxylate cotransporter that accepts a range of tricarboxylic acid-cycle intermediates with 4-5 carbon atoms. There is no interaction with monocarboxylates. The polypeptide is Sodium-dependent high-affinity dicarboxylate transporter 2 (nac-2) (Caenorhabditis elegans).